Here is a 316-residue protein sequence, read N- to C-terminus: tRNA pseudouridine synthase B (316 aa).

The Nucleophile role is filled by aspartate 47.

This sequence belongs to the pseudouridine synthase TruB family. Type 1 subfamily.

The catalysed reaction is uridine(55) in tRNA = pseudouridine(55) in tRNA. In terms of biological role, responsible for synthesis of pseudouridine from uracil-55 in the psi GC loop of transfer RNAs. The polypeptide is tRNA pseudouridine synthase B (Aliivibrio fischeri (strain ATCC 700601 / ES114) (Vibrio fischeri)).